A 141-amino-acid polypeptide reads, in one-letter code: Nucleoside diphosphate kinase (141 aa).

K11, F59, R87, T93, R104, and N114 together coordinate ATP. H117 serves as the catalytic Pros-phosphohistidine intermediate.

This sequence belongs to the NDK family. In terms of assembly, homotetramer. Requires Mg(2+) as cofactor.

The protein resides in the cytoplasm. The catalysed reaction is a 2'-deoxyribonucleoside 5'-diphosphate + ATP = a 2'-deoxyribonucleoside 5'-triphosphate + ADP. The enzyme catalyses a ribonucleoside 5'-diphosphate + ATP = a ribonucleoside 5'-triphosphate + ADP. In terms of biological role, major role in the synthesis of nucleoside triphosphates other than ATP. The ATP gamma phosphate is transferred to the NDP beta phosphate via a ping-pong mechanism, using a phosphorylated active-site intermediate. This Pseudomonas putida (strain W619) protein is Nucleoside diphosphate kinase.